A 234-amino-acid chain; its full sequence is Multicopy suppressor of SEC21 protein 28 (234 aa).

At 1–47 (MQTPPESTDVKLDTLNEPSAHLIEKNVALPKDIFRSYLSYWIYEIAR) the chain is on the cytoplasmic side. At Thr3 the chain carries Phosphothreonine. Residues 48–68 (YTPVMILSLVIGVLVLLIIFF) traverse the membrane as a helical segment. Residues 69–72 (NDNE) are Extracellular-facing. A helical transmembrane segment spans residues 73-93 (ACVFNSAIFAFTSLVGLLIIL). The Cytoplasmic portion of the chain corresponds to 94–234 (SDGNPKLVSR…NIDALLKKTE (141 aa)). The segment at 231–234 (KKTE) is COPI binding.

It belongs to the DUP/COS family. In terms of assembly, interacts with MST27. Binds to coatomer proteins of COPI and SEC23/SEC24 of COPII coated vesicles.

The protein localises to the endoplasmic reticulum. The protein resides in the golgi apparatus. It localises to the cytoplasmic vesicle. It is found in the COPI-coated vesicle membrane. Its subcellular location is the COPII-coated vesicle membrane. Functionally, involved in protein trafficking vesicle formation, probably by stabilizing of coatomer at the Golgi membrane and thus allowing the efficient formation of COPI coated vesicles. The sequence is that of Multicopy suppressor of SEC21 protein 28 (MST28) from Saccharomyces cerevisiae (strain ATCC 204508 / S288c) (Baker's yeast).